The chain runs to 127 residues: Small ribosomal subunit protein uS11 (127 aa).

The protein belongs to the universal ribosomal protein uS11 family. As to quaternary structure, part of the 30S ribosomal subunit. Interacts with proteins S7 and S18. Binds to IF-3.

Its function is as follows. Located on the platform of the 30S subunit, it bridges several disparate RNA helices of the 16S rRNA. Forms part of the Shine-Dalgarno cleft in the 70S ribosome. This chain is Small ribosomal subunit protein uS11, found in Flavobacterium psychrophilum (strain ATCC 49511 / DSM 21280 / CIP 103535 / JIP02/86).